The sequence spans 2724 residues: Eukaryotic translation initiation factor 2-alpha kinase 2 (2724 aa).

The Cytoplasmic portion of the chain corresponds to 1-24; that stretch reads MLNMVDQKKGINNGSSTGVINNIN. Residues 25–45 traverse the membrane as a helical segment; the sequence is GKIKNEFIFMYLIAAGGFSCV. Residues 46–673 lie on the Extracellular side of the membrane; the sequence is YKIKKKKSNK…KFYIKRHNQK (628 aa). Residues 112–153 are disordered; the sequence is KRERRGRRKEQQREQMGDKRREKRQQQRREKRKEQNTNTKKR. Residues 120–146 show a composition bias toward basic and acidic residues; that stretch reads KEQQREQMGDKRREKRQQQRREKRKEQ. A helical transmembrane segment spans residues 674-694; it reads TYFFENIIFYHYIIMLFLDIE. At 695-718 the chain is on the cytoplasmic side; it reads KYKNKFVSLFQYNLYRKLLKISKR. The helical transmembrane segment at 719-739 threads the bilayer; sequence IVLMLHRIETNVICIFLLKHF. At 740–800 the chain is on the extracellular side; the sequence is EDYFIRKGIH…KKNIFNFFIE (61 aa). Residues 801–821 traverse the membrane as a helical segment; the sequence is LFLNNIQINIFKKFEILYLII. The Cytoplasmic segment spans residues 822 to 832; sequence YFYNYFEKSKQ. Residues 833-853 traverse the membrane as a helical segment; sequence FDIEGIGDIIYVWLSLINLFY. The Extracellular portion of the chain corresponds to 854–876; the sequence is DDKGKCIKILSKIFAKLNKKLYY. The helical transmembrane segment at 877–897 threads the bilayer; that stretch reads VYWGKLYIIMNWTTIVDTIFI. The Cytoplasmic segment spans residues 898–908; the sequence is RNVLSINREGN. A helical transmembrane segment spans residues 909 to 929; that stretch reads YYWVIIVLKMINYFVNVAYTL. Residues 930-996 are Extracellular-facing; sequence TRMDIFFIKV…KKNYDIYTKY (67 aa). Residues 997–1017 traverse the membrane as a helical segment; it reads AILFIYCFIIQAYYFDTLFNI. Topologically, residues 1018–2724 are cytoplasmic; the sequence is RSLESNEIAN…GDIFLPDKCP (1707 aa). Lys-2029 contacts ATP. Residues 2084–2719 enclose the Protein kinase domain; the sequence is KHYFTKCGIL…KIISAGDIFL (636 aa). Positions 2120 to 2155 form a coiled coil; that stretch reads INTLNEENQNMFCKNKEKKEENYKKIDTNISQFSEK. The active-site Proton acceptor is Asp-2229. Positions 2479 to 2507 are disordered; it reads EKMDKNKIAAQKKKKKKENKHPIGRRSTN. Residues 2488–2502 show a composition bias toward basic residues; the sequence is AQKKKKKKENKHPIG.

It belongs to the protein kinase superfamily. Ser/Thr protein kinase family. GCN2 subfamily. Post-translationally, auto-phosphorylated.

Its subcellular location is the membrane. The catalysed reaction is L-seryl-[protein] + ATP = O-phospho-L-seryl-[protein] + ADP + H(+). It catalyses the reaction L-threonyl-[protein] + ATP = O-phospho-L-threonyl-[protein] + ADP + H(+). Phosphorylates translation factor eIF2alpha in salivary gland sporozoites during dormancy, which leads to an inhibition of protein translation and accumulation of stalled mRNAs into granules. The sequence is that of Eukaryotic translation initiation factor 2-alpha kinase 2 from Plasmodium berghei (strain Anka).